Reading from the N-terminus, the 565-residue chain is NAD-dependent malic enzyme (565 aa).

Tyrosine 104 serves as the catalytic Proton donor. Residue arginine 157 coordinates NAD(+). The active-site Proton acceptor is the lysine 175. A divalent metal cation contacts are provided by glutamate 246, aspartate 247, and aspartate 270. Aspartate 270 and asparagine 418 together coordinate NAD(+).

This sequence belongs to the malic enzymes family. In terms of assembly, homotetramer. Mg(2+) serves as cofactor. It depends on Mn(2+) as a cofactor.

The enzyme catalyses (S)-malate + NAD(+) = pyruvate + CO2 + NADH. The catalysed reaction is oxaloacetate + H(+) = pyruvate + CO2. This Serratia proteamaculans (strain 568) protein is NAD-dependent malic enzyme.